We begin with the raw amino-acid sequence, 1476 residues long: ABC-type transporter FG02316 (1476 aa).

Asn-2 carries N-linked (GlcNAc...) asparagine glycosylation. 10 helical membrane-spanning segments follow: residues 23–43 (FTLLFEESILVVPITALLLLA), 64–84 (WLYCKIILCLLLLASQIAFLV), 97–117 (SLPAAALSIVASITLLGLSYV), 156–176 (AAITALISTVVKILMLSAETI), 266–286 (ILFIIFPRLCFIGFTFCQPFL), 305–325 (QGYGLIGAWFLVFIGLAVTTG), 384–404 (VWANLIEIVIAVYLLGRQLGL), 407–427 (LIPVGAAIFSIVGSVIAVSFV), 485–505 (LLIWNMVLAYLAPIFAPVLSF), and 532–552 (LFALLQEPLASFVTSLSSFMG). Positions 274–552 (LCFIGFTFCQ…FVTSLSSFMG (279 aa)) constitute an ABC transmembrane type-1 1 domain. Residues 586–615 (ISGVSSSEEKHPVSPIQESMMKTEPSGDSP) form a disordered region. Positions 622–847 (IRNASFGYDR…SDNYVSHSDV (226 aa)) constitute an ABC transporter 1 domain. Residue Asn-624 is glycosylated (N-linked (GlcNAc...) asparagine). 654 to 661 (GPVGSGKS) serves as a coordination point for ATP. N-linked (GlcNAc...) asparagine glycosylation is found at Asn-682, Asn-696, Asn-798, and Asn-836. The disordered stretch occupies residues 842-870 (VSHSDVSSPDGARSKAPSSGPASSSAPVP). Residues 855 to 870 (SKAPSSGPASSSAPVP) show a composition bias toward low complexity. Helical transmembrane passes span 906-926 (MNAIGWIPTMVFVLAICAYIF), 950-970 (LGYYLGVYAMLGALSIIFLVL), 1021-1041 (LIDMDLPLSALNTFATFVLCI), 1045-1065 (ILIAVGSYYTAIAFPFLLATL), 1137-1157 (WLTLVLDMIVTIIAVLVVVLV), and 1167-1187 (GLIGVALVNIIQFSQHLKLLM). An ABC transmembrane type-1 2 domain is found at 916-1195 (VFVLAICAYI…LMTFWTTLET (280 aa)). The ABC transporter 2 domain maps to 1232 to 1464 (ILFDQVSAGY…GPDASTFASM (233 aa)). N-linked (GlcNAc...) asparagine glycosylation is present at Asn-1250. 1265 to 1272 (GRTGSGKS) lines the ATP pocket. Asn-1414 carries N-linked (GlcNAc...) asparagine glycosylation.

This sequence belongs to the ABC transporter superfamily. ABCC family. Conjugate transporter (TC 3.A.1.208) subfamily.

The protein resides in the cell membrane. Functionally, ABC-type transporter; part of the gene cluster that mediates the biosynthesis of the fusahexin, a cyclic hydrophobic hexapeptide with the amino acid sequence cyclo-(D-Ala-L-Leu-D-allo-Thr-L-Pro-D-Leu-L-Leu) that plays an important role in cell surface hydrophobicity. This is ABC-type transporter FG02316 from Gibberella zeae (strain ATCC MYA-4620 / CBS 123657 / FGSC 9075 / NRRL 31084 / PH-1) (Wheat head blight fungus).